We begin with the raw amino-acid sequence, 781 residues long: MLVLMLVVATTFRLCPLVKARPLCRIRTLRTGKVFPVEEKIQGDRLYFSSGKTHLIKHPCKKNLALYLGRQIFLTKDTFESSLIPFSIPTSMQVGTPEVTSAHFAGSVLLLVVNQKVYVYDYEANFWTASTGIQHPVSHVSGDNCCYSGNSFCMDISNSVFAYLRGDQVSQANIYFSNSRGYRFQKYTQERRAELVGTFGGIFSFHSLSQVGLLLVDEQMAMFSYSDHPLNRSFGLPFDYDRALDILIAPGQKGILIFWSEKNLLVSRNSGQLVESVQVREGQRILYNSIVKANVTIHSVAANENELAVLTEENNLYYGSLGIQSSSLIKFADQNIWSQEAVLMFTDVGMLEILTPLRDVLFPAFDFQKCRLNIQALLMDPQLQAGVCKVELLQGEFENKMYTIDMNSQLELTALMIPRPGMLPVPLVSVSNPHSLGLQAVICEDGYTYDGNTKHRLNISLKQQHHWGRADPNFTSSIKRPTISTITLDIANKEISCVDLKPLTALISVGCDLEKKIVIQNELSACYHGVLDPVALQDNYSYIIEREAYDPNFQGQQAKKDLEVHYPYEKLGCPLLAYYDIPWKPVVELWREGKFQEVVEAEYVLLEMNGLFTYTYSLTASTAGCSAQPQNWTTITKMAGDTAPFSWDRENYISCHDPNYHEPLRWPDVPYQILGGQTENKVVFDQRNGIYIFFISIVDPSYSYCRLETTFSVYVYGAFPLSIFPPEITIVLLTAATLLSIWLAYMIPQLLHTEQGLEGNGFWVRLYQRCRKSCACLWGRC.

Positions 1–20 are cleaved as a signal peptide; it reads MLVLMLVVATTFRLCPLVKA. At 21-725 the chain is on the extracellular side; it reads RPLCRIRTLR…YGAFPLSIFP (705 aa). 7 disulfide bridges follow: Cys24-Cys370, Cys60-Cys146, Cys145-Cys153, Cys388-Cys497, Cys511-Cys705, Cys526-Cys573, and Cys625-Cys655. Asn231, Asn294, Asn458, Asn473, Asn539, and Asn631 each carry an N-linked (GlcNAc...) asparagine glycan. Residues 726-749 form a helical membrane-spanning segment; that stretch reads PEITIVLLTAATLLSIWLAYMIPQ. At 750-781 the chain is on the cytoplasmic side; it reads LLHTEQGLEGNGFWVRLYQRCRKSCACLWGRC.

It belongs to the CATSPERD family. As to quaternary structure, component of the CatSper complex or CatSpermasome composed of the core pore-forming members CATSPER1, CATSPER2, CATSPER3 and CATSPER4 as well as auxiliary members CATSPERB, CATSPERG, CATSPERD, CATSPERE, CATSPERZ, C2CD6/CATSPERT, TMEM249, TMEM262 and EFCAB9. HSPA1 may be an additional auxiliary complex member. The core complex members CATSPER1, CATSPER2, CATSPER3 and CATSPER4 form a heterotetrameric channel. The auxiliary CATSPERB, CATSPERG, CATSPERD and CATSPERE subunits form a pavilion-like structure over the pore which stabilizes the complex through interactions with CATSPER4, CATSPER3, CATSPER1 and CATSPER2 respectively. TMEM262/CATSPERH interacts with CATSPERB, further stabilizing the complex. C2CD6/CATSPERT interacts at least with CATSPERD and is required for targeting the CatSper complex in the flagellar membrane.

The protein resides in the cell projection. It localises to the cilium. It is found in the flagellum membrane. Auxiliary component of the CatSper complex, a complex involved in sperm cell hyperactivation. Sperm cell hyperactivation is needed for sperm motility which is essential late in the preparation of sperm for fertilization. Required for CATSPER1 stability before intraflagellar transport and/or incorporation of the CatSper complex channel into the flagellar membrane. The sequence is that of Cation channel sperm-associated auxiliary subunit delta from Bos taurus (Bovine).